Consider the following 481-residue polypeptide: Chromosomal replication initiator protein DnaA (481 aa).

The domain I, interacts with DnaA modulators stretch occupies residues M1–P74. The interval P74–T144 is domain II. The disordered stretch occupies residues A101–V123. Residues Q111–V123 show a composition bias toward low complexity. Residues R145–A361 form a domain III, AAA+ region region. 4 residues coordinate ATP: G189, G191, K192, and T193. Positions R362 to G481 are domain IV, binds dsDNA.

Belongs to the DnaA family. Oligomerizes as a right-handed, spiral filament on DNA at oriC.

Its subcellular location is the cytoplasm. In terms of biological role, plays an essential role in the initiation and regulation of chromosomal replication. ATP-DnaA binds to the origin of replication (oriC) to initiate formation of the DNA replication initiation complex once per cell cycle. Binds the DnaA box (a 9 base pair repeat at the origin) and separates the double-stranded (ds)DNA. Forms a right-handed helical filament on oriC DNA; dsDNA binds to the exterior of the filament while single-stranded (ss)DNA is stabiized in the filament's interior. The ATP-DnaA-oriC complex binds and stabilizes one strand of the AT-rich DNA unwinding element (DUE), permitting loading of DNA polymerase. After initiation quickly degrades to an ADP-DnaA complex that is not apt for DNA replication. Binds acidic phospholipids. This chain is Chromosomal replication initiator protein DnaA, found in Aromatoleum aromaticum (strain DSM 19018 / LMG 30748 / EbN1) (Azoarcus sp. (strain EbN1)).